Here is a 505-residue protein sequence, read N- to C-terminus: Lysine--tRNA ligase (505 aa).

E415 and E422 together coordinate Mg(2+).

The protein belongs to the class-II aminoacyl-tRNA synthetase family. In terms of assembly, homodimer. It depends on Mg(2+) as a cofactor.

It is found in the cytoplasm. The enzyme catalyses tRNA(Lys) + L-lysine + ATP = L-lysyl-tRNA(Lys) + AMP + diphosphate. In Serratia proteamaculans (strain 568), this protein is Lysine--tRNA ligase.